We begin with the raw amino-acid sequence, 477 residues long: Ribulose bisphosphate carboxylase large chain (477 aa).

A propeptide spanning residues 1-2 (MS) is cleaved from the precursor. An N-acetylproline modification is found at proline 3. Position 14 is an N6,N6,N6-trimethyllysine (lysine 14). 2 residues coordinate substrate: asparagine 123 and threonine 173. Lysine 175 acts as the Proton acceptor in catalysis. Lysine 177 is a binding site for substrate. Mg(2+) is bound by residues lysine 201, aspartate 203, and glutamate 204. Lysine 201 carries the N6-carboxylysine modification. Histidine 294 (proton acceptor) is an active-site residue. Substrate is bound by residues arginine 295, histidine 327, and serine 379.

It belongs to the RuBisCO large chain family. Type I subfamily. As to quaternary structure, heterohexadecamer of 8 large chains and 8 small chains; disulfide-linked. The disulfide link is formed within the large subunit homodimers. It depends on Mg(2+) as a cofactor. Post-translationally, the disulfide bond which can form in the large chain dimeric partners within the hexadecamer appears to be associated with oxidative stress and protein turnover.

It localises to the plastid. The protein localises to the chloroplast. The catalysed reaction is 2 (2R)-3-phosphoglycerate + 2 H(+) = D-ribulose 1,5-bisphosphate + CO2 + H2O. It carries out the reaction D-ribulose 1,5-bisphosphate + O2 = 2-phosphoglycolate + (2R)-3-phosphoglycerate + 2 H(+). Its function is as follows. RuBisCO catalyzes two reactions: the carboxylation of D-ribulose 1,5-bisphosphate, the primary event in carbon dioxide fixation, as well as the oxidative fragmentation of the pentose substrate in the photorespiration process. Both reactions occur simultaneously and in competition at the same active site. The sequence is that of Ribulose bisphosphate carboxylase large chain from Manihot esculenta (Cassava).